A 65-amino-acid polypeptide reads, in one-letter code: uncharacterized protein (65 aa).

2 consecutive transmembrane segments (helical) span residues 4–24 (AWLF…DKVL) and 39–59 (LPIP…FIVF).

Its subcellular location is the membrane. This is an uncharacterized protein from Streptococcus pneumoniae serotype 2 (strain D39 / NCTC 7466).